The chain runs to 82 residues: UPF0213 protein MW0443 (82 aa).

The 76-residue stretch at Asp-2–Arg-77 folds into the GIY-YIG domain.

Belongs to the UPF0213 family.

The chain is UPF0213 protein MW0443 from Staphylococcus aureus (strain MW2).